A 434-amino-acid polypeptide reads, in one-letter code: Serine hydroxymethyltransferase (434 aa).

Residues Leu-132 and 136-138 (GHL) contribute to the (6S)-5,6,7,8-tetrahydrofolate site. N6-(pyridoxal phosphate)lysine is present on Lys-241.

This sequence belongs to the SHMT family. In terms of assembly, homodimer. Requires pyridoxal 5'-phosphate as cofactor.

The protein localises to the cytoplasm. The enzyme catalyses (6R)-5,10-methylene-5,6,7,8-tetrahydrofolate + glycine + H2O = (6S)-5,6,7,8-tetrahydrofolate + L-serine. It functions in the pathway one-carbon metabolism; tetrahydrofolate interconversion. The protein operates within amino-acid biosynthesis; glycine biosynthesis; glycine from L-serine: step 1/1. In terms of biological role, catalyzes the reversible interconversion of serine and glycine with tetrahydrofolate (THF) serving as the one-carbon carrier. This reaction serves as the major source of one-carbon groups required for the biosynthesis of purines, thymidylate, methionine, and other important biomolecules. Also exhibits THF-independent aldolase activity toward beta-hydroxyamino acids, producing glycine and aldehydes, via a retro-aldol mechanism. This is Serine hydroxymethyltransferase from Kineococcus radiotolerans (strain ATCC BAA-149 / DSM 14245 / SRS30216).